We begin with the raw amino-acid sequence, 716 residues long: MFNVTKKSIEWGGETLTLETGKVARQADGSVIATLGETSVMANVTFAKAAKPGQDFFPLTVHYQERYYAAGKVPGGFFKREARPSEKETLTSRLIDRPIRPLFVDGFKNEVLLIVTVLSHDLVNEPDIVAMIAASAALTISGVPFMGPIGAARVGFAGGEYVLNPDVDDMQKLRENPEQRLDLVIAGTKDAVMMVESEAYELSEAEMLGAVKFGHEAMQPVIDMIIDFAEEAAHEPFDFSPPDYAALYAKVKSLGETQMRAAFAIREKQDRVNAIDAARAAIKAQLSEAELADENLGTAFKKLESSILRGDIINGGARIDGRDTKTVRPIISETSVLPRTHGSALFTRGETQALVVTTLGTGEDEQIIDALHGNSRSNFLLHYNFPPYSVGEVGRFGPPGRREIGHGKLAWRALQAVLPAATDFPYTIRVVSEITESNGSSSMASVCGGSLSMMDAGVPLKAPVAGVAMGLILEDDGKWAVLTDILGDEDHLGDMDFKVAGTENGITSLQMDIKVAGITPEIMEQALAQAKDGRMHILGEMSKALSSANSFSAYAPKIETLTIPTDKIREVIGSGGKVIREIVETSGAKVDINDDGVIKIASNDQAAIKKAYDMIWSIVAEPEEGQIYTGKVVKLVDFGAFVNFFGKRDGLVHVSQIANKRLTHPNEVLKEGQEVKVKLLGFDERGKVRLGMKMVDQETGQEIQPEKKEKEEAGEA.

Positions 490 and 496 each coordinate Mg(2+). The KH domain maps to 556–615; that stretch reads PKIETLTIPTDKIREVIGSGGKVIREIVETSGAKVDINDDGVIKIASNDQAAIKKAYDMI. The S1 motif domain occupies 625-693; it reads GQIYTGKVVK…ERGKVRLGMK (69 aa). Residues 695–716 form a disordered region; sequence VDQETGQEIQPEKKEKEEAGEA. Residues 704-716 are compositionally biased toward basic and acidic residues; sequence QPEKKEKEEAGEA.

Belongs to the polyribonucleotide nucleotidyltransferase family. It depends on Mg(2+) as a cofactor.

It localises to the cytoplasm. It carries out the reaction RNA(n+1) + phosphate = RNA(n) + a ribonucleoside 5'-diphosphate. Functionally, involved in mRNA degradation. Catalyzes the phosphorolysis of single-stranded polyribonucleotides processively in the 3'- to 5'-direction. The chain is Polyribonucleotide nucleotidyltransferase from Cereibacter sphaeroides (strain ATCC 17029 / ATH 2.4.9) (Rhodobacter sphaeroides).